The primary structure comprises 358 residues: Anhydro-N-acetylmuramic acid kinase (358 aa).

Position 9-16 (9-16 (GTSLDGVD)) interacts with ATP.

This sequence belongs to the anhydro-N-acetylmuramic acid kinase family.

The catalysed reaction is 1,6-anhydro-N-acetyl-beta-muramate + ATP + H2O = N-acetyl-D-muramate 6-phosphate + ADP + H(+). The protein operates within amino-sugar metabolism; 1,6-anhydro-N-acetylmuramate degradation. It participates in cell wall biogenesis; peptidoglycan recycling. In terms of biological role, catalyzes the specific phosphorylation of 1,6-anhydro-N-acetylmuramic acid (anhMurNAc) with the simultaneous cleavage of the 1,6-anhydro ring, generating MurNAc-6-P. Is required for the utilization of anhMurNAc either imported from the medium or derived from its own cell wall murein, and thus plays a role in cell wall recycling. The polypeptide is Anhydro-N-acetylmuramic acid kinase (Acidiphilium cryptum (strain JF-5)).